The primary structure comprises 321 residues: NADPH-dependent codeinone reductase 1-1 (321 aa).

NADPH contacts are provided by T27 and D51. Catalysis depends on proton donor residues Y56 and H119. H119 provides a ligand contact to substrate. 5 residues coordinate NADPH: Q187, S214, L216, S264, and R269.

This sequence belongs to the aldo/keto reductase family. As to expression, latex secreting cells (laticifer cells). Expressed constitutively and ubiquitously with highest levels in capsules. Restricted to the parietal region of sieve elements adjacent or proximal to laticifers in roots, stems, leaves and carpels.

It is found in the cytoplasm. Its subcellular location is the cytosol. It catalyses the reaction codeine + NADP(+) = codeinone + NADPH + H(+). It carries out the reaction neopine + NADP(+) = neopinone + NADPH + H(+). The catalysed reaction is morphine + NADP(+) = morphinone + NADPH + H(+). The enzyme catalyses neomorphine + NADP(+) = neomorphinone + NADPH + H(+). The protein operates within alkaloid biosynthesis; morphine biosynthesis. In terms of biological role, NADPH-dependent reductase involved in biosynthesis of morphinan-type benzylisoquinoline and opiate alkaloids natural products. Reduces codeinone to codeine in the penultimate step in morphine biosynthesis. Can use morphinone, hydrocodone and hydromorphone as substrate during reductive reaction with NADPH as cofactor, and morphine and dihydrocodeine as substrate during oxidative reaction with NADP as cofactor. Converts morphinone to morphine, and neomorphinone to neomorphine. Reduces irreversibly neopinone, a spontaneous isomer of codeinone, to neopine; in planta, neopine levels are limited to low levels. The chain is NADPH-dependent codeinone reductase 1-1 from Papaver somniferum (Opium poppy).